A 108-amino-acid polypeptide reads, in one-letter code: MSCYTAILKSVGGLALFQVANGAIDLCRHFFMYFCEQKLRPNSFWFVVVRAIASMIMYLVLGIALLYISEQDDKKNTNNANTNNDSNSNNSNNDKRNESSINSNSSPK.

The signal sequence occupies residues 1 to 22; that stretch reads MSCYTAILKSVGGLALFQVANG. Residues 23-45 are Intravirion-facing; sequence AIDLCRHFFMYFCEQKLRPNSFW. A helical membrane pass occupies residues 46 to 66; the sequence is FVVVRAIASMIMYLVLGIALL. The Virion surface portion of the chain corresponds to 67–83; it reads YISEQDDKKNTNNANTN. Residues 76–108 are disordered; the sequence is NTNNANTNNDSNSNNSNNDKRNESSINSNSSPK. Low complexity predominate over residues 77-92; sequence TNNANTNNDSNSNNSN. N-linked (GlcNAc...) asparagine; by host glycosylation is found at asparagine 84, asparagine 89, and asparagine 97. The segment covering 99 to 108 has biased composition (polar residues); the sequence is SSINSNSSPK.

Belongs to the oerthopoxvirus OPG135 family.

The protein localises to the virion membrane. The protein resides in the host cytoplasm. Functionally, envelope protein. Required for an early step in virion morphogenesis. This is Virion membrane protein OPG135 (OPG135) from Vaccinia virus (strain Western Reserve) (VACV).